Consider the following 177-residue polypeptide: Large ribosomal subunit protein uL6 (177 aa).

This sequence belongs to the universal ribosomal protein uL6 family. As to quaternary structure, part of the 50S ribosomal subunit.

Its function is as follows. This protein binds to the 23S rRNA, and is important in its secondary structure. It is located near the subunit interface in the base of the L7/L12 stalk, and near the tRNA binding site of the peptidyltransferase center. The protein is Large ribosomal subunit protein uL6 of Acinetobacter baumannii (strain AB307-0294).